The following is a 444-amino-acid chain: MAERKYFGTDGVRGKVGSYPITPDFVLKLGWAAGKVLATQGTGKVLIGKDTRISGYMLESALEAGLAAAGLSAAFTGPMPTPAIAYLTRTFRSEAGIVISASHNPFYDNGIKFFSAQGTKLPDDVEEAIEAMLEQPMDCVESAKLGRASRINDAAGRYIEFCKSTFPAHLSLDKYKIVVDCANGATYHIAPNVMRELGAEVIEIGTQPDGMNINENCGATDIKALQNKVLETKADIGLAYDGDGDRLIMVDHFGNKVDGDQILFIIAREALRSGNLKGGVVGTLMSNMSLELALKQLGIPFVRANVGDRYVLEKMQEYNWILGGENSGHIIIADKNTTGDGVIASLAVLAAMVQHKLSLNELASAVKLFPQVLINVRFAGGANPLESDAVKAVATEVEKQLAGKGRILLRKSGTEPLIRVMVECEDAELAQLSAEKIAEAVRSN.

Serine 102 acts as the Phosphoserine intermediate in catalysis. 4 residues coordinate Mg(2+): serine 102, aspartate 241, aspartate 243, and aspartate 245. At serine 102 the chain carries Phosphoserine.

Belongs to the phosphohexose mutase family. The cofactor is Mg(2+). Activated by phosphorylation.

The enzyme catalyses alpha-D-glucosamine 1-phosphate = D-glucosamine 6-phosphate. In terms of biological role, catalyzes the conversion of glucosamine-6-phosphate to glucosamine-1-phosphate. This chain is Phosphoglucosamine mutase, found in Histophilus somni (strain 129Pt) (Haemophilus somnus).